The primary structure comprises 505 residues: Maturase K (505 aa).

The protein belongs to the intron maturase 2 family. MatK subfamily.

The protein localises to the plastid. It localises to the chloroplast. Functionally, usually encoded in the trnK tRNA gene intron. Probably assists in splicing its own and other chloroplast group II introns. The polypeptide is Maturase K (Silene otites (Spanish catchfly)).